The chain runs to 574 residues: MAKNHKVEPVGGPPSDVEHLKLESNYLRGSLTDSLANRITGGLPDLDNRLLKFHGSYMQDDRDYRNEREKQKLEPYYQFMLRVVTPGGVATPEQWLLMDSLADKYGTGSLKLTTRQAFQLHGVLKWNLKKTIQEINAAMLSTLAACGDVSRNVMCNPNPYQSELHSEVFHWSQQLTSHLAPKTPAYHEIWLDGEKVVDGAEQGEVEPIYGPVYLPRKFKIGIAVPPSNDVDVYSQDLGYIAILGEDGKLAGFNVCVGGGMGMTHGDTATYPQLAKVIGFVTPDQVLDLAEKVVTIQRDYGNRSVRKYARFKYTIDRHGLPWFMDELQDRLGWELAPAREFHFEHTGDRYGWIKGKDGKWNLNLYVQAGRVVDTEDNKLRSALREIAKIHTGDFRLTANQNLVIANVTAQKKTKIVALLKEFGIAEGSNYSALRRSALSCVALPTCGLAMAEAERYLPSLIDRLEPILANAGLQDQEINIRMTGCPNGCARPALGEISFIGKSPGKYNMYMGAGFTGDRLSKMYKENIGEDEIIDTLTPIIDRYASERNKGENFGDFVIRAGYVKAVTDGTNFHD.

Positions 439, 445, 484, and 488 each coordinate [4Fe-4S] cluster. Siroheme is bound at residue Cys-488.

Belongs to the nitrite and sulfite reductase 4Fe-4S domain family. As to quaternary structure, alpha(8)-beta(8). The alpha component is a flavoprotein, the beta component is a hemoprotein. Siroheme is required as a cofactor. Requires [4Fe-4S] cluster as cofactor.

The catalysed reaction is hydrogen sulfide + 3 NADP(+) + 3 H2O = sulfite + 3 NADPH + 4 H(+). The protein operates within sulfur metabolism; hydrogen sulfide biosynthesis; hydrogen sulfide from sulfite (NADPH route): step 1/1. In terms of biological role, component of the sulfite reductase complex that catalyzes the 6-electron reduction of sulfite to sulfide. This is one of several activities required for the biosynthesis of L-cysteine from sulfate. The sequence is that of Sulfite reductase [NADPH] hemoprotein beta-component from Paenibacillus sp. (strain JDR-2).